A 134-amino-acid chain; its full sequence is Interleukin-4 (134 aa).

The N-terminal stretch at 1–23 is a signal peptide; sequence MGLTYQLLPALVCLLACTSFIQG. 2 disulfide bridges follow: Cys24-Cys133 and Cys48-Cys88. N-linked (GlcNAc...) asparagine glycosylation occurs at Asn38. Residue Asn101 is glycosylated (N-linked (GlcNAc...) asparagine).

This sequence belongs to the IL-4/IL-13 family.

Its subcellular location is the secreted. Functionally, participates in at least several B-cell activation processes as well as of other cell types. It is a costimulator of DNA-synthesis. It induces the expression of class II MHC molecules on resting B-cells. It enhances both secretion and cell surface expression of IgE and IgG1. It also regulates the expression of the low affinity Fc receptor for IgE (CD23) on both lymphocytes and monocytes. Positively regulates IL31RA expression in macrophages. Stimulates autophagy in dendritic cells by interfering with mTORC1 signaling and through the induction of RUFY4. The sequence is that of Interleukin-4 (IL4) from Equus caballus (Horse).